A 431-amino-acid chain; its full sequence is Glutamate-1-semialdehyde 2,1-aminomutase (431 aa).

K265 is modified (N6-(pyridoxal phosphate)lysine).

Belongs to the class-III pyridoxal-phosphate-dependent aminotransferase family. HemL subfamily. As to quaternary structure, homodimer. It depends on pyridoxal 5'-phosphate as a cofactor.

It localises to the cytoplasm. It catalyses the reaction (S)-4-amino-5-oxopentanoate = 5-aminolevulinate. It functions in the pathway porphyrin-containing compound metabolism; protoporphyrin-IX biosynthesis; 5-aminolevulinate from L-glutamyl-tRNA(Glu): step 2/2. This Aliivibrio fischeri (strain ATCC 700601 / ES114) (Vibrio fischeri) protein is Glutamate-1-semialdehyde 2,1-aminomutase.